A 295-amino-acid chain; its full sequence is Ethanolamine ammonia-lyase small subunit (295 aa).

Adenosylcob(III)alamin-binding residues include Val207, Glu228, and Cys258.

It belongs to the EutC family. As to quaternary structure, the basic unit is a heterodimer which dimerizes to form tetramers. The heterotetramers trimerize; 6 large subunits form a core ring with 6 small subunits projecting outwards. Adenosylcob(III)alamin is required as a cofactor.

The protein resides in the bacterial microcompartment. The enzyme catalyses ethanolamine = acetaldehyde + NH4(+). The protein operates within amine and polyamine degradation; ethanolamine degradation. Its function is as follows. Catalyzes the deamination of various vicinal amino-alcohols to oxo compounds. Allows this organism to utilize ethanolamine as the sole source of nitrogen and carbon in the presence of external vitamin B12. The chain is Ethanolamine ammonia-lyase small subunit from Shigella sonnei (strain Ss046).